Reading from the N-terminus, the 122-residue chain is NADPH-dependent 7-cyano-7-deazaguanine reductase (122 aa).

The active-site Thioimide intermediate is Cys34. The active-site Proton donor is the Asp41. Substrate-binding positions include 56 to 58 (VEL) and 75 to 76 (HE).

Belongs to the GTP cyclohydrolase I family. QueF type 1 subfamily.

Its subcellular location is the cytoplasm. It carries out the reaction 7-aminomethyl-7-carbaguanine + 2 NADP(+) = 7-cyano-7-deazaguanine + 2 NADPH + 3 H(+). The protein operates within tRNA modification; tRNA-queuosine biosynthesis. Catalyzes the NADPH-dependent reduction of 7-cyano-7-deazaguanine (preQ0) to 7-aminomethyl-7-deazaguanine (preQ1). The chain is NADPH-dependent 7-cyano-7-deazaguanine reductase from Anaeromyxobacter sp. (strain Fw109-5).